A 424-amino-acid polypeptide reads, in one-letter code: Envelope glycoprotein M (424 aa).

Residues 1-23 lie on the Intravirion side of the membrane; the sequence is MASRARMERNYRGLSHIDYVHKK. A helical transmembrane segment spans residues 24-44; that stretch reads MWVVQAVCFGIAVLVFFGTLV. The Virion surface portion of the chain corresponds to 45-94; sequence AASINLTEGFPCFFAAVVDYRTVNTTLVHTGLTYPRLGGVVPVLFFQTKA. Residues 95–115 form a helical membrane-spanning segment; the sequence is VVFFFYATSIVFVFLVCYITV. Residues 116-143 are Intravirion-facing; that stretch reads GAIISSKKHVGAAYMGSGAFVFSLMASP. A helical transmembrane segment spans residues 144 to 164; it reads LTILLGTVSIWLLQAVVIVLA. Over 165–166 the chain is Virion surface; that stretch reads HK. A helical transmembrane segment spans residues 167–187; the sequence is LIVLAAAVYLVHFSTITFFYG. At 188-226 the chain is on the intravirion side; it reads YFCGRGVDSKVYAEDISSAKDIDGSLHKLIGNVRAMMVN. The chain crosses the membrane as a helical span at residues 227–247; that stretch reads LLSIVYSIILIMSSLMFGMLL. The Virion surface segment spans residues 248-261; it reads ANSFTLKFWHVIVT. A helical membrane pass occupies residues 262–282; it reads VLITTSVLTLIYLLVIEFLIA. Position 283 (Arg283) is a topological domain, intravirion. Residues 284–304 form a helical membrane-spanning segment; the sequence is YVHIILGAYIGLLIGYGMLWT. Residues 305–327 are Virion surface-facing; it reads TTCDYVNRFYYAMGANASNLRIA. A helical membrane pass occupies residues 328 to 348; it reads CHSVLAVFTVLILLAMVVRLI. The Intravirion segment spans residues 349–424; sequence RASLYHRRRS…YSGSESEWDD (76 aa). Positions 382–424 are disordered; it reads SYKQRGSQSEDERALTQSRSAEASDEDTIYDRVYSGSESEWDD.

The protein belongs to the herpesviridae glycoprotein M family. As to quaternary structure, interacts (via N-terminus) with gN (via N-terminus). The gM-gN heterodimer forms the gCII complex.

The protein resides in the virion membrane. It is found in the host Golgi apparatus. It localises to the host trans-Golgi network. Its subcellular location is the host endosome membrane. The protein localises to the host nucleus inner membrane. Its function is as follows. Envelope glycoprotein important for virion assembly and egress. Plays a role in the correct incorporation of gH-gL into virion membrane. Directs the glycoprotein N (gN) to the host trans-Golgi network. The polypeptide is Envelope glycoprotein M (Gallid herpesvirus 2 (strain Chicken/Md5/ATCC VR-987) (GaHV-2)).